Reading from the N-terminus, the 537-residue chain is Nedd4 binding protein 3 (537 aa).

The residue at position 172 (Ser-172) is a Phosphoserine. Disordered regions lie at residues 173–234 (LDEG…VLSC), 327–359 (RKEL…EEEA), and 422–456 (LQEQ…EARE). Residues 178-207 (PEPSLSDSSSGGSFGRSPGTGPSPFSSSLG) are compositionally biased toward low complexity. The stretch at 295 to 523 (VDRLHEVAQK…LEQELRVLRE (229 aa)) forms a coiled coil.

This sequence belongs to the N4BP3 family. In terms of assembly, binds NEDD4. Interacts with 14-3-3 proteins. Interacts with MAVS.

The protein resides in the cytoplasmic vesicle. It localises to the cell projection. Its subcellular location is the axon. The protein localises to the dendrite. Its function is as follows. Plays a positive role in the antiviral innate immune signaling pathway. Mechanistically, interacts with MAVS and functions as a positive regulator to promote 'Lys-63'-linked polyubiquitination of MAVS and thus strengthens the interaction between MAVS and TRAF2. Also plays a role in axon and dendrite arborization during cranial nerve development. May also be important for neural crest migration and early development of other anterior structures including eye, brain and cranial cartilage. This Rattus norvegicus (Rat) protein is Nedd4 binding protein 3.